Here is a 484-residue protein sequence, read N- to C-terminus: MKFIVKLYPEIMMKSKPVRMRFTKMLETNIRNVLKKVDEDAKVQRQWDRIMVMVPKHKPELAQAFGERLACIPGIAHVVQVDEYSFESVDDIYQQALPVYRDQIAGKTFCVRVKRTGDHDFNSIDVERYVGGGLNQFTDAIGVRLKNPDVTVNLEIDRDKLYMVTKRIEGLGGFPMATQEDVLSLISGGFDSGVSSYQFIKKGARTHYCFFNLGGAQHEIGVKQVAYHLWKTYGESHKVKFVSVPFEPVVAEILEKIDNGQMGVVLKRMMMRTAARIAERLGIQALVTGESLGQVSSQTLTNLNVIDRCTELLILRPLIAMDKQDIINESRRIGTEDFAKSMPEYCGVISQKPTVKAVLAKVEAEEKKFSEDLIDQIVAQAVTIDIREIAEQMDTRITETETVIAIETNEVVIDIRAPEEEEHKPLNIEGVEVKRIPFFKLATQFADLDKQKTYLLYCERGVMSKLQALYLIEQGYTNVKVYRP.

The THUMP domain maps to 63 to 167 (QAFGERLACI…RDKLYMVTKR (105 aa)). ATP contacts are provided by residues 185-186 (LI), Lys-267, Gly-289, and Gln-298. A disulfide bridge connects residues Cys-346 and Cys-458. A Rhodanese domain is found at 406-484 (IETNEVVIDI…GYTNVKVYRP (79 aa)). The active-site Cysteine persulfide intermediate is Cys-458.

The protein belongs to the ThiI family.

It localises to the cytoplasm. It catalyses the reaction [ThiI sulfur-carrier protein]-S-sulfanyl-L-cysteine + a uridine in tRNA + 2 reduced [2Fe-2S]-[ferredoxin] + ATP + H(+) = [ThiI sulfur-carrier protein]-L-cysteine + a 4-thiouridine in tRNA + 2 oxidized [2Fe-2S]-[ferredoxin] + AMP + diphosphate. The enzyme catalyses [ThiS sulfur-carrier protein]-C-terminal Gly-Gly-AMP + S-sulfanyl-L-cysteinyl-[cysteine desulfurase] + AH2 = [ThiS sulfur-carrier protein]-C-terminal-Gly-aminoethanethioate + L-cysteinyl-[cysteine desulfurase] + A + AMP + 2 H(+). Its pathway is cofactor biosynthesis; thiamine diphosphate biosynthesis. Its function is as follows. Catalyzes the ATP-dependent transfer of a sulfur to tRNA to produce 4-thiouridine in position 8 of tRNAs, which functions as a near-UV photosensor. Also catalyzes the transfer of sulfur to the sulfur carrier protein ThiS, forming ThiS-thiocarboxylate. This is a step in the synthesis of thiazole, in the thiamine biosynthesis pathway. The sulfur is donated as persulfide by IscS. This Shewanella putrefaciens (strain CN-32 / ATCC BAA-453) protein is tRNA sulfurtransferase.